Reading from the N-terminus, the 424-residue chain is CinA-like protein (424 aa).

Belongs to the CinA family.

This is CinA-like protein from Shewanella denitrificans (strain OS217 / ATCC BAA-1090 / DSM 15013).